The sequence spans 240 residues: Ribonuclease HII (240 aa).

The 200-residue stretch at 27-226 (GPVAGVDEAG…GETRSLRLED (200 aa)) folds into the RNase H type-2 domain. A divalent metal cation contacts are provided by aspartate 33, glutamate 34, and aspartate 127.

Belongs to the RNase HII family. Mn(2+) serves as cofactor. Requires Mg(2+) as cofactor.

The protein resides in the cytoplasm. The enzyme catalyses Endonucleolytic cleavage to 5'-phosphomonoester.. Endonuclease that specifically degrades the RNA of RNA-DNA hybrids. This is Ribonuclease HII from Parafrankia sp. (strain EAN1pec).